Here is a 534-residue protein sequence, read N- to C-terminus: MRLRGRGPRAAPSSSSGAGDARRLAPPGRNPFVHELRLSALQKAQVAFMTLTLFPIRLLFAAFMMLLAWPFALVASLGPPDKEPEQPLALWRKVVDFLLKAIMRTMWFAGGFHRVAVKGRQALPTEAAILTLAPHSSYFDAIPVTMTMSSIVMKAESRDIPIWGTLIRYIRPVFVSRSDQDSRRKTVEEIKRRAQSNGKWPQIMIFPEGTCTNRTCLITFKPGAFIPGVPVQPVVLRYPNKLDTITWTWQGPGALKILWLTLCQFQNQVEIEFLPVYCPSEEEKRNPALYASNVRRVMAKALGVSVTDYTFEDCQLALAEGQLRLPADTCLLEFARLVRGLGLKPENLEKDLDKYSESARMKRGEKIRLPEFAAYLEVPVSDALEDMFSLFDESGGGEIDLREYVVALSVVCRPSQTLATIQLAFKMYGSPEDGSIDEADLSCILKTALGISELTVTDLFQAIDQEERGRITFDDFCGFAEMYPDFAEDYLYPDQTHSDSCAQTPPAPTPNGFCIDFSPEHSDFGRKNSCKKVD.

Residues 1–25 (MRLRGRGPRAAPSSSSGAGDARRLA) are disordered. The Cytoplasmic portion of the chain corresponds to 1–57 (MRLRGRGPRAAPSSSSGAGDARRLAPPGRNPFVHELRLSALQKAQVAFMTLTLFPIR). A compositionally biased stretch (low complexity) spans 8–19 (PRAAPSSSSGAG). A helical; Signal-anchor for type II membrane protein membrane pass occupies residues 58 to 78 (LLFAAFMMLLAWPFALVASLG). At 79–534 (PPDKEPEQPL…GRKNSCKKVD (456 aa)) the chain is on the lumenal side. The short motif at 135-140 (HSSYFD) is the HXXXXD motif element. 2 EF-hand domains span residues 379–414 (PVSD…VCRP) and 451–486 (ISEL…YPDF). Ca(2+)-binding residues include Asp392, Ser394, Glu398, and Glu403. The short motif at 531–534 (KKVD) is the Di-lysine motif element.

The protein belongs to the 1-acyl-sn-glycerol-3-phosphate acyltransferase family. Enriched in alveolar type II cells of lung. Also highly expressed in stomach.

It is found in the endoplasmic reticulum membrane. The protein resides in the golgi apparatus membrane. The protein localises to the cell membrane. Its subcellular location is the lipid droplet. It carries out the reaction a 1-acyl-sn-glycero-3-phosphocholine + an acyl-CoA = a 1,2-diacyl-sn-glycero-3-phosphocholine + CoA. The enzyme catalyses a 1-O-alkyl-sn-glycero-3-phosphocholine + acetyl-CoA = a 1-O-alkyl-2-acetyl-sn-glycero-3-phosphocholine + CoA. It catalyses the reaction a 1-acyl-sn-glycero-3-phosphate + an acyl-CoA = a 1,2-diacyl-sn-glycero-3-phosphate + CoA. The catalysed reaction is a 1-O-(1Z-alkenyl)-sn-glycero-3-phosphocholine + an acyl-CoA = a 1-O-(1Z-alkenyl)-2-acyl-sn-glycero-3-phosphocholine + CoA. It carries out the reaction 1-acyl-sn-glycero-3-phospho-(1'-sn-glycerol) + an acyl-CoA = a 1,2-diacyl-sn-glycero-3-phospho-(1'-sn-glycerol) + CoA. The enzyme catalyses a 1-acyl-sn-glycero-3-phosphocholine + hexadecanoyl-CoA = 1-acyl-2-hexadecanoyl-sn-glycero-3-phosphocholine + CoA. It catalyses the reaction a 1-acyl-sn-glycero-3-phosphate + hexadecanoyl-CoA = 1-acyl-2-hexadecanoyl-sn-glycero-3-phosphate + CoA. The catalysed reaction is 1-acyl-sn-glycero-3-phospho-(1'-sn-glycerol) + hexadecanoyl-CoA = 1-acyl-2-hexadecanoyl-sn-glycero-3-phospho-(1'-sn-glycerol) + CoA. It carries out the reaction 1-hexadecanoyl-sn-glycero-3-phosphocholine + hexadecanoyl-CoA = 1,2-dihexadecanoyl-sn-glycero-3-phosphocholine + CoA. The enzyme catalyses 1-O-hexadecyl-sn-glycero-3-phosphocholine + hexadecanoyl-CoA = 1-O-hexadecyl-2-hexadecanoyl-sn-glycero-3-phosphocholine + CoA. It catalyses the reaction a 1-O-(1Z-alkenyl)-sn-glycero-3-phosphocholine + hexadecanoyl-CoA = 1-O-(1Z)-alkenyl-2-hexadecanoyl-sn-glycero-3-phosphocholine + CoA. The catalysed reaction is 1-hexadecanoyl-sn-glycero-3-phospho-(1'-sn-glycerol) + hexadecanoyl-CoA = 1,2-dihexadecanoyl-sn-glycero-3-phospho-(1'-sn-glycerol) + CoA. It carries out the reaction 1-dodecanoyl-sn-glycero-3-phosphocholine + hexadecanoyl-CoA = 1-dodecanoyl-2-hexadecanoyl-sn-glycero-3-phosphocholine + CoA. The enzyme catalyses 1-tetradecanoyl-sn-glycero-3-phosphocholine + hexadecanoyl-CoA = 1-tetradecanoyl-2-hexadecanoyl-sn-glycero-3-phosphocholine + CoA. It catalyses the reaction 1-O-octadecyl-sn-glycero-3-phosphocholine + hexadecanoyl-CoA = 1-O-octadecyl-2-hexadecanoyl-sn-glycero-3-phosphocholine + CoA. The catalysed reaction is 1-octadecanoyl-sn-glycero-3-phosphocholine + hexadecanoyl-CoA = 1-octadecanoyl-2-hexadecanoyl-sn-glycero-3-phosphocholine + CoA. It carries out the reaction 1-(9Z-octadecenoyl)-sn-glycero-3-phosphocholine + hexadecanoyl-CoA = 1-(9Z-octadecenoyl)-2-hexadecanoyl-sn-glycero-3-phosphocholine + CoA. The enzyme catalyses 1-eicosanoyl-sn-glycero-3-phosphocholine + hexadecanoyl-CoA = 1-eicosanoyl-2-hexadecanoyl-sn-glycero-3-phosphocholine + CoA. It catalyses the reaction hexanoyl-CoA + 1-hexadecanoyl-sn-glycero-3-phosphocholine = 1-hexadecanoyl-2-hexanoyl-sn-glycero-3-phosphocholine + CoA. The catalysed reaction is octanoyl-CoA + 1-hexadecanoyl-sn-glycero-3-phosphocholine = 1-hexadecanoyl-2-octanoyl-sn-glycero-3-phosphocholine + CoA. It carries out the reaction decanoyl-CoA + 1-hexadecanoyl-sn-glycero-3-phosphocholine = 1-hexadecanoyl-2-decanoyl-sn-glycero-3-phosphocholine + CoA. The enzyme catalyses dodecanoyl-CoA + 1-hexadecanoyl-sn-glycero-3-phosphocholine = 1-hexadecanoyl-2-dodecanoyl-sn-glycero-3-phosphocholine + CoA. It catalyses the reaction tetradecanoyl-CoA + 1-hexadecanoyl-sn-glycero-3-phosphocholine = 1-hexadecanoyl-2-tetradecanoyl-sn-glycero-3-phosphocholine + CoA. The catalysed reaction is 1-hexadecanoyl-sn-glycero-3-phosphocholine + (9Z)-octadecenoyl-CoA = 1-hexadecanoyl-2-(9Z-octadecenoyl)-sn-glycero-3-phosphocholine + CoA. It carries out the reaction (9Z,12Z)-octadecadienoyl-CoA + 1-hexadecanoyl-sn-glycero-3-phosphocholine = 1-hexadecanoyl-2-(9Z,12Z-octadecadienoyl)-sn-glycero-3-phosphocholine + CoA. The enzyme catalyses (4Z,7Z,10Z,13Z,16Z,19Z)-docosahexaenoyl-CoA + 1-hexadecanoyl-sn-glycero-3-phosphocholine = 1-hexadecanoyl-2-(4Z,7Z,10Z,13Z,16Z,19Z-docosahexaenoyl)-sn-glycero-3-phosphocholine + CoA. It catalyses the reaction 1-hexadecanoyl-sn-glycero-3-phosphocholine + acetyl-CoA = 1-hexadecanoyl-2-acetyl-sn-glycero-3-phosphocholine + CoA. The catalysed reaction is eicosanoyl-CoA + 1-hexadecanoyl-sn-glycero-3-phosphocholine = 1-hexadecanoyl-2-eicosanoyl-sn-glycero-3-phosphocholine + CoA. It carries out the reaction 1-O-hexadecyl-sn-glycero-3-phosphocholine + acetyl-CoA = 1-O-hexadecyl-2-acetyl-sn-glycero-3-phosphocholine + CoA. It participates in lipid metabolism; phospholipid metabolism. Activity is stimulated by Mg(2+) or Mn(2+). Its function is as follows. Exhibits acyltransferase activity. Exhibits acetyltransferase activity. Activity is calcium-independent. Catalyzes the conversion of lysophosphatidylcholine (1-acyl-sn-glycero-3-phosphocholine or LPC) into phosphatidylcholine (1,2-diacyl-sn-glycero-3-phosphocholine or PC). Catalyzes the conversion 1-acyl-sn-glycerol-3-phosphate (lysophosphatidic acid or LPA) into 1,2-diacyl-sn-glycerol-3-phosphate (phosphatidic acid or PA) by incorporating an acyl moiety at the sn-2 position of the glycerol backbone. Displays a clear preference for saturated fatty acyl-CoAs, and 1-myristoyl or 1-palmitoyl LPC as acyl donors and acceptors, respectively. Involved in platelet-activating factor (PAF) biosynthesis by catalyzing the conversion of the PAF precursor, 1-O-alkyl-sn-glycero-3-phosphocholine (lyso-PAF) into 1-O-alkyl-2-acetyl-sn-glycero-3-phosphocholine (PAF). May synthesize phosphatidylcholine in pulmonary surfactant, thereby playing a pivotal role in respiratory physiology. Involved in the regulation of lipid droplet number and size. This Rattus norvegicus (Rat) protein is Lysophosphatidylcholine acyltransferase 1 (Lpcat1).